The sequence spans 67 residues: Sec-independent protein translocase protein TatA (67 aa).

The chain crosses the membrane as a helical span at residues 1–21 (MMPGPFELIVILVIVLLLFGG).

This sequence belongs to the TatA/E family. As to quaternary structure, the Tat system comprises two distinct complexes: a TatABC complex, containing multiple copies of TatA, TatB and TatC subunits, and a separate TatA complex, containing only TatA subunits. Substrates initially bind to the TatABC complex, which probably triggers association of the separate TatA complex to form the active translocon.

It localises to the cell inner membrane. Functionally, part of the twin-arginine translocation (Tat) system that transports large folded proteins containing a characteristic twin-arginine motif in their signal peptide across membranes. TatA could form the protein-conducting channel of the Tat system. This chain is Sec-independent protein translocase protein TatA, found in Ruthia magnifica subsp. Calyptogena magnifica.